The chain runs to 211 residues: PITH domain-containing protein GA19395 (211 aa).

The PITH domain occupies 20–192 (DHALEMGIEY…GVTICNYEAR (173 aa)).

This sequence belongs to the PITHD1 family.

In Drosophila pseudoobscura pseudoobscura (Fruit fly), this protein is PITH domain-containing protein GA19395.